A 273-amino-acid chain; its full sequence is 4-hydroxy-tetrahydrodipicolinate reductase (273 aa).

NAD(+) contacts are provided by residues 12-17 and glutamate 38; that span reads GAGGRM. Residue arginine 39 participates in NADP(+) binding. Residues 102–104 and 126–129 each bind NAD(+); these read GTT and AANF. Residue histidine 159 is the Proton donor/acceptor of the active site. Histidine 160 lines the (S)-2,3,4,5-tetrahydrodipicolinate pocket. Lysine 163 functions as the Proton donor in the catalytic mechanism. A (S)-2,3,4,5-tetrahydrodipicolinate-binding site is contributed by 169–170; the sequence is GT.

This sequence belongs to the DapB family. Homotetramer.

It is found in the cytoplasm. The catalysed reaction is (S)-2,3,4,5-tetrahydrodipicolinate + NAD(+) + H2O = (2S,4S)-4-hydroxy-2,3,4,5-tetrahydrodipicolinate + NADH + H(+). It catalyses the reaction (S)-2,3,4,5-tetrahydrodipicolinate + NADP(+) + H2O = (2S,4S)-4-hydroxy-2,3,4,5-tetrahydrodipicolinate + NADPH + H(+). Its pathway is amino-acid biosynthesis; L-lysine biosynthesis via DAP pathway; (S)-tetrahydrodipicolinate from L-aspartate: step 4/4. Catalyzes the conversion of 4-hydroxy-tetrahydrodipicolinate (HTPA) to tetrahydrodipicolinate. The chain is 4-hydroxy-tetrahydrodipicolinate reductase from Escherichia fergusonii (strain ATCC 35469 / DSM 13698 / CCUG 18766 / IAM 14443 / JCM 21226 / LMG 7866 / NBRC 102419 / NCTC 12128 / CDC 0568-73).